A 1368-amino-acid chain; its full sequence is DNA-directed RNA polymerase subunit beta (1368 aa).

It belongs to the RNA polymerase beta chain family. The RNAP catalytic core consists of 2 alpha, 1 beta, 1 beta' and 1 omega subunit. When a sigma factor is associated with the core the holoenzyme is formed, which can initiate transcription.

The enzyme catalyses RNA(n) + a ribonucleoside 5'-triphosphate = RNA(n+1) + diphosphate. In terms of biological role, DNA-dependent RNA polymerase catalyzes the transcription of DNA into RNA using the four ribonucleoside triphosphates as substrates. This is DNA-directed RNA polymerase subunit beta from Syntrophotalea carbinolica (strain DSM 2380 / NBRC 103641 / GraBd1) (Pelobacter carbinolicus).